The following is a 345-amino-acid chain: N-acetyl-gamma-glutamyl-phosphate reductase (345 aa).

Cys149 is an active-site residue.

It belongs to the NAGSA dehydrogenase family. Type 1 subfamily.

It is found in the cytoplasm. The catalysed reaction is N-acetyl-L-glutamate 5-semialdehyde + phosphate + NADP(+) = N-acetyl-L-glutamyl 5-phosphate + NADPH + H(+). The protein operates within amino-acid biosynthesis; L-arginine biosynthesis; N(2)-acetyl-L-ornithine from L-glutamate: step 3/4. Functionally, catalyzes the NADPH-dependent reduction of N-acetyl-5-glutamyl phosphate to yield N-acetyl-L-glutamate 5-semialdehyde. The protein is N-acetyl-gamma-glutamyl-phosphate reductase of Herminiimonas arsenicoxydans.